The primary structure comprises 559 residues: Dihydroxy-acid dehydratase 2 (559 aa).

Cysteine 53 lines the [2Fe-2S] cluster pocket. Aspartate 85 lines the Mg(2+) pocket. [2Fe-2S] cluster is bound at residue cysteine 126. 2 residues coordinate Mg(2+): aspartate 127 and lysine 128. The residue at position 128 (lysine 128) is an N6-carboxylysine. Cysteine 195 serves as a coordination point for [2Fe-2S] cluster. Position 446 (glutamate 446) interacts with Mg(2+). Catalysis depends on serine 472, which acts as the Proton acceptor.

The protein belongs to the IlvD/Edd family. As to quaternary structure, homodimer. Requires [2Fe-2S] cluster as cofactor. Mg(2+) is required as a cofactor.

The catalysed reaction is (2R)-2,3-dihydroxy-3-methylbutanoate = 3-methyl-2-oxobutanoate + H2O. It catalyses the reaction (2R,3R)-2,3-dihydroxy-3-methylpentanoate = (S)-3-methyl-2-oxopentanoate + H2O. The protein operates within amino-acid biosynthesis; L-isoleucine biosynthesis; L-isoleucine from 2-oxobutanoate: step 3/4. It participates in amino-acid biosynthesis; L-valine biosynthesis; L-valine from pyruvate: step 3/4. In terms of biological role, functions in the biosynthesis of branched-chain amino acids. Catalyzes the dehydration of (2R,3R)-2,3-dihydroxy-3-methylpentanoate (2,3-dihydroxy-3-methylvalerate) into 2-oxo-3-methylpentanoate (2-oxo-3-methylvalerate) and of (2R)-2,3-dihydroxy-3-methylbutanoate (2,3-dihydroxyisovalerate) into 2-oxo-3-methylbutanoate (2-oxoisovalerate), the penultimate precursor to L-isoleucine and L-valine, respectively. This is Dihydroxy-acid dehydratase 2 from Pseudoalteromonas translucida (strain TAC 125).